We begin with the raw amino-acid sequence, 474 residues long: tRNA-2-methylthio-N(6)-dimethylallyladenosine synthase (474 aa).

Positions 3–120 (KKLHIKTWGC…LPEMINSVRG (118 aa)) constitute an MTTase N-terminal domain. [4Fe-4S] cluster is bound by residues C12, C49, C83, C157, C161, and C164. The Radical SAM core domain maps to 143 to 375 (RAEGPTAFVS…QERINQQAMA (233 aa)). In terms of domain architecture, TRAM spans 378–441 (RRMLGTTQRI…PNSLRGKVVR (64 aa)).

The protein belongs to the methylthiotransferase family. MiaB subfamily. As to quaternary structure, monomer. The cofactor is [4Fe-4S] cluster.

The protein localises to the cytoplasm. It carries out the reaction N(6)-dimethylallyladenosine(37) in tRNA + (sulfur carrier)-SH + AH2 + 2 S-adenosyl-L-methionine = 2-methylsulfanyl-N(6)-dimethylallyladenosine(37) in tRNA + (sulfur carrier)-H + 5'-deoxyadenosine + L-methionine + A + S-adenosyl-L-homocysteine + 2 H(+). In terms of biological role, catalyzes the methylthiolation of N6-(dimethylallyl)adenosine (i(6)A), leading to the formation of 2-methylthio-N6-(dimethylallyl)adenosine (ms(2)i(6)A) at position 37 in tRNAs that read codons beginning with uridine. This chain is tRNA-2-methylthio-N(6)-dimethylallyladenosine synthase, found in Escherichia coli (strain UTI89 / UPEC).